Reading from the N-terminus, the 487-residue chain is Putative KilA-N domain-containing protein L37 (487 aa).

Residues 1 to 12 (MKVQKSSKKPLK) are compositionally biased toward basic residues. The segment at 1–137 (MKVQKSSKKP…DINSDDDNNL (137 aa)) is disordered. Over residues 22–34 (KSGSKSMKSSKSS) the composition is skewed to low complexity. 2 stretches are compositionally biased toward acidic residues: residues 47-77 (DSEISDNESFDSEISDSESSDNESSDNESSD) and 111-136 (VLDDESDDDNQSDNESSDINSDDDNN). In terms of domain architecture, KilA-N spans 175–284 (EISKGIYGTF…HKVSKIVNDY (110 aa)). The stretch at 290–338 (FDKHEQLIKGKDDKIAELTRKIDKQTSLMKDQKSTIKEQDKKINELLSK) forms a coiled coil.

The chain is Putative KilA-N domain-containing protein L37 from Acanthamoeba polyphaga mimivirus (APMV).